We begin with the raw amino-acid sequence, 397 residues long: L-asparaginase-like protein GD25160 (397 aa).

The signal sequence occupies residues 1–22; it reads MLAQSCCLRLLILLLLFTSICS. 3 disulfides stabilise this stretch: cysteine 90–cysteine 95, cysteine 189–cysteine 205, and cysteine 344–cysteine 371.

Belongs to the Ntn-hydrolase family.

The chain is L-asparaginase-like protein GD25160 from Drosophila simulans (Fruit fly).